A 440-amino-acid chain; its full sequence is L-gulonolactone oxidase (440 aa).

The 171-residue stretch at 17 to 187 (YGCCPEMYFQ…LTVTLQCVPQ (171 aa)) folds into the FAD-binding PCMH-type domain. H54 is modified (pros-8alpha-FAD histidine). Residues 253–273 (FYLLEFLLWISTFLPGLVGWI) traverse the membrane as a helical segment.

The protein belongs to the oxygen-dependent FAD-linked oxidoreductase family. The cofactor is FAD.

It is found in the microsome membrane. The protein resides in the endoplasmic reticulum membrane. The catalysed reaction is L-gulono-1,4-lactone + O2 = L-ascorbate + H2O2 + H(+). Its pathway is cofactor biosynthesis; L-ascorbate biosynthesis via UDP-alpha-D-glucuronate pathway; L-ascorbate from UDP-alpha-D-glucuronate: step 4/4. Functionally, oxidizes L-gulono-1,4-lactone to hydrogen peroxide and L-xylo-hexulonolactone which spontaneously isomerizes to L-ascorbate. The chain is L-gulonolactone oxidase (GULO) from Bos taurus (Bovine).